We begin with the raw amino-acid sequence, 278 residues long: Complement C1q tumor necrosis factor-related protein 6 (278 aa).

Residues 1–46 (MQWLRVRESPGEATGHRVTMGTAALGPVWAALLLFLLMCEIPMVEL) form the signal peptide. Asn91 is a glycosylation site (N-linked (GlcNAc...) asparagine). The Collagen-like domain maps to 97 to 138 (GDKGDPGPMGLPGYMGREGPQGEPGPQGSKGDKGEMGSPGAP). The segment at 99–135 (KGDPGPMGLPGYMGREGPQGEPGPQGSKGDKGEMGSP) is disordered. In terms of domain architecture, C1q spans 139–259 (CQKRFFAFSV…KRQRENAIYS (121 aa)).

It localises to the secreted. The polypeptide is Complement C1q tumor necrosis factor-related protein 6 (C1QTNF6) (Homo sapiens (Human)).